We begin with the raw amino-acid sequence, 443 residues long: C4-dicarboxylate transport protein (443 aa).

The next 9 helical transmembrane spans lie at 17 to 37 (PFYS…ILLG), 57 to 77 (LVKM…IAGM), 92 to 112 (LYFL…ANVV), 139 to 159 (EQSI…GAFA), 161 to 181 (GDIL…AMVG), 201 to 221 (LVGI…AFTI), 234 to 254 (MLIG…LGAV), 320 to 340 (IYMT…LSWG), and 368 to 388 (AATL…ILGI).

It belongs to the dicarboxylate/amino acid:cation symporter (DAACS) (TC 2.A.23) family.

It localises to the cell inner membrane. In terms of biological role, responsible for the transport of dicarboxylates such as succinate, fumarate, and malate from the periplasm across the membrane. This is C4-dicarboxylate transport protein from Rhizobium etli (strain ATCC 51251 / DSM 11541 / JCM 21823 / NBRC 15573 / CFN 42).